Consider the following 358-residue polypeptide: tRNA-specific 2-thiouridylase MnmA (358 aa).

ATP is bound by residues 6–13 (ALSGGVDS) and Met-32. Cys-103 functions as the Nucleophile in the catalytic mechanism. Cys-103 and Cys-201 form a disulfide bridge. Position 127 (Gly-127) interacts with ATP. Residues 151 to 153 (KDQ) are interaction with tRNA. Cys-201 (cysteine persulfide intermediate) is an active-site residue.

It belongs to the MnmA/TRMU family.

It is found in the cytoplasm. It carries out the reaction S-sulfanyl-L-cysteinyl-[protein] + uridine(34) in tRNA + AH2 + ATP = 2-thiouridine(34) in tRNA + L-cysteinyl-[protein] + A + AMP + diphosphate + H(+). Catalyzes the 2-thiolation of uridine at the wobble position (U34) of tRNA, leading to the formation of s(2)U34. This Thermotoga neapolitana (strain ATCC 49049 / DSM 4359 / NBRC 107923 / NS-E) protein is tRNA-specific 2-thiouridylase MnmA.